We begin with the raw amino-acid sequence, 87 residues long: Small ribosomal subunit protein bS20 (87 aa).

A compositionally biased stretch (basic residues) spans Met1 to Ala11. A disordered region spans residues Met1 to Met27.

This sequence belongs to the bacterial ribosomal protein bS20 family.

In terms of biological role, binds directly to 16S ribosomal RNA. This is Small ribosomal subunit protein bS20 from Actinobacillus succinogenes (strain ATCC 55618 / DSM 22257 / CCUG 43843 / 130Z).